A 78-amino-acid chain; its full sequence is Acyl carrier protein (78 aa).

Residues 1–76 (MALFEDIQAV…DVVKYIEDNK (76 aa)) form the Carrier domain. Position 36 is an O-(pantetheine 4'-phosphoryl)serine (S36).

This sequence belongs to the acyl carrier protein (ACP) family. Post-translationally, 4'-phosphopantetheine is transferred from CoA to a specific serine of apo-ACP by AcpS. This modification is essential for activity because fatty acids are bound in thioester linkage to the sulfhydryl of the prosthetic group.

It localises to the cytoplasm. It functions in the pathway lipid metabolism; fatty acid biosynthesis. Functionally, carrier of the growing fatty acid chain in fatty acid biosynthesis. The polypeptide is Acyl carrier protein (Helicobacter pylori (strain J99 / ATCC 700824) (Campylobacter pylori J99)).